The sequence spans 150 residues: UPF0178 protein PputGB1_5282 (150 aa).

It belongs to the UPF0178 family.

In Pseudomonas putida (strain GB-1), this protein is UPF0178 protein PputGB1_5282.